A 1029-amino-acid chain; its full sequence is MEEQVANAIEIASNPSSEPALKAQAFDFVNQLRSDPSGWQVCLSLFTQTPQRSGIVRHVALEVVNGAAQGGLIDLQALAFVKDGLLAYLRQVYGQDAGASDPPNIQNKIAQTVTFLFSALYANGWETFFDDLLSLTYKSPSSTARDNASGIIFYLRVINSIHDEIGDVLVSRSRNEQDKANSLKDLIRQRDMQQITSSWQQILSEWRDGNDVIVEMCLKAVGSWVSWIDIGLVVNQTMLDLLFQQLGRAQKADLRQGEEKVRDAAVDVFTEIIGKKMKAEDKIDMIIFLNLDTIVSQLSNSPPLHANRFTFKYDTDLAETVAKLVNITVIDIVRALEQEGVSAECKEKANGLLQVFLPHILRFFSDEYDEVCSTVIPCVSDLLTYLRKIAKINPALAAQHSSILLPILKAIIAKMRYDDTSSWGDEDDQTDEAEFQELRKRLGVLQQIVASVNEQLYMEAVSEVVGTTFENLRQSGAQLDWRDLDLALHEMFLFGDLAVKAGSLYTKGSPNNQAAERLIEMMLRMVESDIRSFTHPATQLQYMEICVRYSSFFHHHTHLIPGVLESFLQLVHHPVKKVKTRSWYLFQRLVKQLRQYIGNVAQTVVEALGDLLVIQAEVSPEGSDGDEMSSEDHEGSADAVFNSQLYLFEAVGIICSTPTVPADKQVLYAQSVLNPIFLDMEKNLEAAKSHDERALLQIHHDIMALGTLARGFSDWMPGTNTPATLPAPEVSEAFNQVSEATLVALESLKTSFNVRTAARFAFSRLIGVLGSRILPQLPRWIDGLLTQTSSRDEMALFLRLLDQVIFGFKGEIYSILDTLLTPFLQRVFSGIADPTTGTDDEIRLAELKREYLNFLLAVLNNDLGAVIISERNQPIFETVISTIEHFSKDIDDFTTAKMAFSVLSKMGSSWGGPDIAPDATNGVPPQAALPGFSQFMISRFSPLCWALPTTPSFNSKDAQARQVLAEAGGLQRTIYSKTGMEYIAYLRDRELPGMGMGGELIEEFLGALSRLDLKGFRQFFPSFIQRLSA.

It belongs to the exportin family.

It is found in the nucleus. The protein resides in the cytoplasm. TRNA nucleus export receptor which facilitates tRNA translocation across the nuclear pore complex. Involved in pre-tRNA splicing, probably by affecting the interaction of pre-tRNA with splicing endonuclease. The sequence is that of Exportin-T (los1) from Aspergillus clavatus (strain ATCC 1007 / CBS 513.65 / DSM 816 / NCTC 3887 / NRRL 1 / QM 1276 / 107).